Reading from the N-terminus, the 610-residue chain is Chaperone protein DnaK (610 aa).

Thr173 is subject to Phosphothreonine; by autocatalysis. Low complexity predominate over residues Gln579–Asn592. The interval Gln579–Lys610 is disordered. The segment covering Ala599–Lys610 has biased composition (basic and acidic residues).

It belongs to the heat shock protein 70 family.

Its function is as follows. Acts as a chaperone. This Staphylococcus aureus (strain bovine RF122 / ET3-1) protein is Chaperone protein DnaK.